We begin with the raw amino-acid sequence, 604 residues long: Glutamine--fructose-6-phosphate aminotransferase [isomerizing] (604 aa).

The active-site Nucleophile; for GATase activity is the C2. Positions 2 to 218 (CGIVGVVGNT…DKELVIVKKD (217 aa)) constitute a Glutamine amidotransferase type-2 domain. 2 SIS domains span residues 284-423 (IIKS…ANGK) and 456-594 (VEQL…VDKP). K599 (for Fru-6P isomerization activity) is an active-site residue.

In terms of assembly, homodimer.

Its subcellular location is the cytoplasm. It carries out the reaction D-fructose 6-phosphate + L-glutamine = D-glucosamine 6-phosphate + L-glutamate. Catalyzes the first step in hexosamine metabolism, converting fructose-6P into glucosamine-6P using glutamine as a nitrogen source. This is Glutamine--fructose-6-phosphate aminotransferase [isomerizing] from Streptococcus agalactiae serotype V (strain ATCC BAA-611 / 2603 V/R).